The sequence spans 542 residues: MAKIIAFEEEARRGMERGLNHLADAVKVTLGPKGRNVVLEKKWGAPTITNDGVSIAKEIELEEPFEKIGAELVKEVAKKTDDVAGDGTTTATVLAQALVREGLRNVAAGANPIALKKGIDKAVEAVTAALLEQAKEVETKEEIAATAGISAGDPAIGELIAEALDKVGKEGVITVEESNALGLELELTEGMRFDKGYLSAYFVTDQERQEAVLEDAYILLVESKISSVKDLLPLLEKVIQGGKSLVIIAEDIEGEALATLVVNKLKGTFKSVAVKAPGFGDRRKAMLQDMAILTGGQVISETVGLSLENADLDALGQARKIVVTKDETTIVEGAGDPDQLAGRVAQIRAEIENSDSDYDREKLQERLAKLAGGVAVIKAGAATEVELKERKHRIEDAVRNAKAAVEEGIVAGGGVALIQAGKVAFETLELVGDESTGGNIVKVAIDAPLKQIAINAGLEGGVVAEKVRSLPAGHGLNAATGDYEDLLAAGINDPVKVTRSALQNAASIAGLFLTTEAIVADKPEKASAPAGGGDGDMGGMGF.

ATP contacts are provided by residues 29–32 (TLGP), 86–90 (DGTTT), glycine 413, 477–479 (NAA), and aspartate 493.

Belongs to the chaperonin (HSP60) family. In terms of assembly, forms a cylinder of 14 subunits composed of two heptameric rings stacked back-to-back. Interacts with the co-chaperonin GroES.

The protein localises to the cytoplasm. It catalyses the reaction ATP + H2O + a folded polypeptide = ADP + phosphate + an unfolded polypeptide.. Together with its co-chaperonin GroES, plays an essential role in assisting protein folding. The GroEL-GroES system forms a nano-cage that allows encapsulation of the non-native substrate proteins and provides a physical environment optimized to promote and accelerate protein folding. This Beutenbergia cavernae (strain ATCC BAA-8 / DSM 12333 / CCUG 43141 / JCM 11478 / NBRC 16432 / NCIMB 13614 / HKI 0122) protein is Chaperonin GroEL.